The chain runs to 606 residues: Cryptochrome-1 (606 aa).

A Photolyase/cryptochrome alpha/beta domain is found at 3-132 (VNAVHWFRKG…EVIVRISHTL (130 aa)). A Glycyl lysine isopeptide (Lys-Gly) (interchain with G-Cter in ubiquitin) cross-link involves residue K11. Residues 50-54 (NRWRF) carry the LIR 1 motif. At S71 the chain carries Phosphoserine; by AMPK. The short motif at 82–87 (DVFPRL) is the LIR 2 element. A Glycyl lysine isopeptide (Lys-Gly) (interchain with G-Cter in ubiquitin) cross-link involves residue K107. The LIR 3 motif lies at 151 to 156 (KRFQTL). K159 is covalently cross-linked (Glycyl lysine isopeptide (Lys-Gly) (interchain with G-Cter in ubiquitin)). S247 bears the Phosphoserine; by MAPK mark. S252 is a binding site for FAD. 2 consecutive short sequence motifs (LIR) follow at residues 255-260 (LRFGCL) and 271-276 (DLYKKV). Position 280 is a phosphoserine; by AMPK (S280). The LIR 6 motif lies at 285 to 290 (SLYGQL). Residue Q289 participates in FAD binding. K329 participates in a covalent cross-link: Glycyl lysine isopeptide (Lys-Gly) (interchain with G-Cter in ubiquitin). The short motif at 335–339 (TGFPW) is the LIR 7 element. Residue H355 participates in FAD binding. The segment at 371-470 (WISWEEGMKV…LIGVNYPKPM (100 aa)) is required for inhibition of CLOCK-BMAL1-mediated transcription. An LIR 8 motif is present at residues 379-384 (KVFEEL). 387–389 (DAD) contacts FAD. 3 consecutive short sequence motifs (LIR) follow at residues 395–400 (GSWMWL), 411–416 (HCYCPV), and 430–435 (RRYLPV). The interval 471–493 (VNHAEASRLNIERMKQIYQQLSR) is interaction with TIMELESS. K485 participates in a covalent cross-link: Glycyl lysine isopeptide (Lys-Gly) (interchain with G-Cter in ubiquitin). 2 short sequence motifs (LIR) span residues 486–491 (QIYQQL) and 492–497 (SRYRGL). Positions 559–606 (YAHGDSQQTHSLKQGRSSAGTGLSSGKRPSQEEDAQSVGPKVQRQSSN) are disordered. Residues 563–586 (DSQQTHSLKQGRSSAGTGLSSGKR) are compositionally biased toward polar residues. A Glycyl lysine isopeptide (Lys-Gly) (interchain with G-Cter in ubiquitin) cross-link involves residue K585. S588 is modified (phosphoserine).

Belongs to the DNA photolyase class-1 family. In terms of assembly, component of the circadian core oscillator, which includes the CRY proteins, CLOCK or NPAS2, BMAL1 or BMAL2, CSNK1D and/or CSNK1E, TIMELESS, and the PER proteins. Interacts directly with TIMELESS. Interacts directly with PER1 and PER2; interaction with PER2 inhibits its ubiquitination and vice versa. Interacts with PER3. Interacts with FBXL21. Interacts with FBXL3. Interacts with PPP5C (via TPR repeats). Interacts with CLOCK-BMAL1 independently of PER2 and DNA. Interacts with HDAC1, HDAC2 and SIN3B. Interacts with nuclear receptors AR, NR1D1, NR3C1/GR, RORA and RORC; the interaction with at least NR3C1/GR is ligand dependent. Interacts with PRKDC. Interacts with the G protein subunit alpha GNAS; the interaction may block GPCR-mediated regulation of cAMP concentrations. Interacts with PRMT5. Interacts with EZH2. Interacts with MYBBP1A, DOCK7, HNRNPU, RPL7A, RPL8 and RPS3. Interacts with MAP1LC3B. Interacts with CLOCK. Interacts with BMAL1. Interacts weakly with HDAC3; this interaction is enhanced in the presence of FBXL3. Interacts with TRIM28, KCTD5 and DDB1. Interacts with DTL. Interacts with DDB1-CUL4A complex. Interacts with FOXO1. Interacts with PSMD2 in a KDM8-dependent manner. Interacts with KDM8 in a FBXL3-dependent manner. Interacts with PPARA. Interacts with PPARG in a ligand-dependent manner. Interacts with PPARD (via domain NR LBD) in a ligand-dependent manner. Interacts with NR1I2 (via domain NR LBD) in a ligand-dependent manner. Interacts with NR1I3, VDR and HNF4A. It depends on FAD as a cofactor. (6R)-5,10-methylene-5,6,7,8-tetrahydrofolate serves as cofactor. Phosphorylation on Ser-247 by MAPK is important for the inhibition of CLOCK-BMAL1-mediated transcriptional activity. Phosphorylation by CSNK1E requires interaction with PER1 or PER2. Phosphorylation at Ser-71 and Ser-280 by AMPK decreases protein stability. Phosphorylation at Ser-588 exhibits a robust circadian rhythm with a peak at CT8, increases protein stability, prevents SCF(FBXL3)-mediated degradation and is antagonized by interaction with PRKDC. Post-translationally, ubiquitinated by the SCF(FBXL3) and SCF(FBXL21) complexes, regulating the balance between degradation and stabilization. The SCF(FBXL3) complex is mainly nuclear and mediates ubiquitination and subsequent degradation of CRY1. In contrast, cytoplasmic SCF(FBXL21) complex-mediated ubiquitination leads to stabilize CRY1 and counteract the activity of the SCF(FBXL3) complex. The SCF(FBXL3) and SCF(FBXL21) complexes probably mediate ubiquitination at different Lys residues. Ubiquitination at Lys-11 and Lys-107 are specifically ubiquitinated by the SCF(FBXL21) complex but not by the SCF(FBXL3) complex. Ubiquitination may be inhibited by PER2. Deubiquitinated by USP7. In terms of processing, undergoes autophagy-mediated degradation in the liver in a time-dependent manner. Autophagic degradation of CRY1 (an inhibitor of gluconeogenesis) occurs during periods of reduced feeding allowing induction of gluconeogenesis and maintenance of blood glucose levels. In terms of tissue distribution, expressed in cones, amacrine cells, and retinal ganglion cells of the retina (at protein level). Expressed in all tissues examined including heart, brain, spleen, lung, liver, skeletal muscle, kidney and testis. Higher levels in brain, liver and testis. In the retina, highly expressed in the ganglion cell layer (GCL) and in the inner nuclear layer (INL). Evenly distributed in central and peripheral retina. In the brain, highly expressed in the suprachiasmatic nucleus (SCN). High levels in cerebral cortical layers particularly in the pyramidial cell layer of the hippocampus, the granular cell layer of the dentate gyrus (DG) and the pyramidal cell layer of the piriform cortex (PFC).

It is found in the cytoplasm. The protein localises to the nucleus. With respect to regulation, KL001 (N-[3-(9H-carbazol-9-yl)-2-hydroxypropyl]-N-(2-furanylmethyl)-methanesulfonamide) binds to CRY1 and stabilizes it by inhibiting FBXL3- and ubiquitin-dependent degradation of CRY1 resulting in lengthening of the circadian periods. KL001-mediated CRY1 stabilization can inhibit glucagon-induced gluconeogenesis in primary hepatocytes. Its function is as follows. Transcriptional repressor which forms a core component of the circadian clock. The circadian clock, an internal time-keeping system, regulates various physiological processes through the generation of approximately 24 hour circadian rhythms in gene expression, which are translated into rhythms in metabolism and behavior. It is derived from the Latin roots 'circa' (about) and 'diem' (day) and acts as an important regulator of a wide array of physiological functions including metabolism, sleep, body temperature, blood pressure, endocrine, immune, cardiovascular, and renal function. Consists of two major components: the central clock, residing in the suprachiasmatic nucleus (SCN) of the brain, and the peripheral clocks that are present in nearly every tissue and organ system. Both the central and peripheral clocks can be reset by environmental cues, also known as Zeitgebers (German for 'timegivers'). The predominant Zeitgeber for the central clock is light, which is sensed by retina and signals directly to the SCN. The central clock entrains the peripheral clocks through neuronal and hormonal signals, body temperature and feeding-related cues, aligning all clocks with the external light/dark cycle. Circadian rhythms allow an organism to achieve temporal homeostasis with its environment at the molecular level by regulating gene expression to create a peak of protein expression once every 24 hours to control when a particular physiological process is most active with respect to the solar day. Transcription and translation of core clock components (CLOCK, NPAS2, BMAL1, BMAL2, PER1, PER2, PER3, CRY1 and CRY2) plays a critical role in rhythm generation, whereas delays imposed by post-translational modifications (PTMs) are important for determining the period (tau) of the rhythms (tau refers to the period of a rhythm and is the length, in time, of one complete cycle). A diurnal rhythm is synchronized with the day/night cycle, while the ultradian and infradian rhythms have a period shorter and longer than 24 hours, respectively. Disruptions in the circadian rhythms contribute to the pathology of cardiovascular diseases, cancer, metabolic syndromes and aging. A transcription/translation feedback loop (TTFL) forms the core of the molecular circadian clock mechanism. Transcription factors, CLOCK or NPAS2 and BMAL1 or BMAL2, form the positive limb of the feedback loop, act in the form of a heterodimer and activate the transcription of core clock genes and clock-controlled genes (involved in key metabolic processes), harboring E-box elements (5'-CACGTG-3') within their promoters. The core clock genes: PER1/2/3 and CRY1/2 which are transcriptional repressors form the negative limb of the feedback loop and interact with the CLOCK|NPAS2-BMAL1|BMAL2 heterodimer inhibiting its activity and thereby negatively regulating their own expression. This heterodimer also activates nuclear receptors NR1D1/2 and RORA/B/G, which form a second feedback loop and which activate and repress BMAL1 transcription, respectively. CRY1 and CRY2 have redundant functions but also differential and selective contributions at least in defining the pace of the SCN circadian clock and its circadian transcriptional outputs. More potent transcriptional repressor in cerebellum and liver than CRY2, though more effective in lengthening the period of the SCN oscillator. On its side, CRY2 seems to play a critical role in tuning SCN circadian period by opposing the action of CRY1. With CRY2, is dispensable for circadian rhythm generation but necessary for the development of intercellular networks for rhythm synchrony. Capable of translocating circadian clock core proteins such as PER proteins to the nucleus. Interacts with CLOCK-BMAL1 independently of PER proteins and is found at CLOCK-BMAL1-bound sites, suggesting that CRY may act as a molecular gatekeeper to maintain CLOCK-BMAL1 in a poised and repressed state until the proper time for transcriptional activation. Represses the CLOCK-BMAL1 induced transcription of BHLHE40/DEC1, ATF4, MTA1, KLF10 and NAMPT. May repress circadian target genes expression in collaboration with HDAC1 and HDAC2 through histone deacetylation. Mediates the clock-control activation of ATR and modulates ATR-mediated DNA damage checkpoint. In liver, mediates circadian regulation of cAMP signaling and gluconeogenesis by binding to membrane-coupled G proteins and blocking glucagon-mediated increases in intracellular cAMP concentrations and CREB1 phosphorylation. Inhibits hepatic gluconeogenesis by decreasing nuclear FOXO1 levels that down-regulates gluconeogenic gene expression. Besides its role in the maintenance of the circadian clock, is also involved in the regulation of other processes. Represses glucocorticoid receptor NR3C1/GR-induced transcriptional activity by binding to glucocorticoid response elements (GREs). Plays a key role in glucose and lipid metabolism modulation, in part, through the transcriptional regulation of genes involved in these pathways, such as LEP or ACSL4. Represses PPARD and its target genes in the skeletal muscle and limits exercise capacity. Plays an essential role in the generation of circadian rhythms in the retina. Represses the transcriptional activity of NR1I2. The protein is Cryptochrome-1 (Cry1) of Mus musculus (Mouse).